Consider the following 296-residue polypeptide: Nucleotide-binding protein spr1424 (296 aa).

Position 13 to 20 (13 to 20 (GMGGAGKT)) interacts with ATP. Residue 63–66 (DMRS) coordinates GTP.

This sequence belongs to the RapZ-like family.

In terms of biological role, displays ATPase and GTPase activities. The sequence is that of Nucleotide-binding protein spr1424 from Streptococcus pneumoniae (strain ATCC BAA-255 / R6).